A 210-amino-acid polypeptide reads, in one-letter code: Sortase A (210 aa).

Topologically, residues 1–5 (MNKQR) are cytoplasmic. The helical transmembrane segment at 6-26 (IYSIVAILLFVVGGVLIGKPF) threads the bilayer. Residues 27 to 210 (YDGYQAEKKQ…GDLVGTKAKK (184 aa)) lie on the Extracellular side of the membrane. The active-site Proton donor/acceptor is histidine 126. The Acyl-thioester intermediate role is filled by cysteine 187.

The protein belongs to the bacterial sortase family. Class A subfamily.

Its subcellular location is the cell membrane. With respect to regulation, inhibited by thiol-reactive reagents. Functionally, transpeptidase that anchors surface proteins to the cell wall. Recognizes and modifies its substrate by proteolytic cleavage of a C-terminal sorting signal. Following cleavage, a covalent intermediate is formed via a thioester bond between the sortase and its substrate, which is then transferred and covalently attached to the cell wall. This sortase recognizes a Leu-Pro-x-Thr-Gly (LPXTG) motif, which is cleaved by the sortase between the threonine and glycine residues. Important for growth in macrophages. May be critical in the early stages of inhalation anthrax. The sequence is that of Sortase A from Bacillus anthracis.